A 610-amino-acid polypeptide reads, in one-letter code: Elongation factor 4 (610 aa).

The region spanning 14–196 (NRIRNFSIIA…ALVANIPPPK (183 aa)) is the tr-type G domain. GTP-binding positions include 26–31 (DHGKST) and 143–146 (NKID).

This sequence belongs to the TRAFAC class translation factor GTPase superfamily. Classic translation factor GTPase family. LepA subfamily.

It localises to the cell inner membrane. The catalysed reaction is GTP + H2O = GDP + phosphate + H(+). Its function is as follows. Required for accurate and efficient protein synthesis under certain stress conditions. May act as a fidelity factor of the translation reaction, by catalyzing a one-codon backward translocation of tRNAs on improperly translocated ribosomes. Back-translocation proceeds from a post-translocation (POST) complex to a pre-translocation (PRE) complex, thus giving elongation factor G a second chance to translocate the tRNAs correctly. Binds to ribosomes in a GTP-dependent manner. This chain is Elongation factor 4, found in Legionella pneumophila (strain Paris).